We begin with the raw amino-acid sequence, 464 residues long: ATP-dependent protease ATPase subunit HslU (464 aa).

ATP is bound by residues valine 18, 60–65 (GVGKTE), aspartate 277, glutamate 342, and arginine 414.

The protein belongs to the ClpX chaperone family. HslU subfamily. A double ring-shaped homohexamer of HslV is capped on each side by a ring-shaped HslU homohexamer. The assembly of the HslU/HslV complex is dependent on binding of ATP.

It localises to the cytoplasm. Functionally, ATPase subunit of a proteasome-like degradation complex; this subunit has chaperone activity. The binding of ATP and its subsequent hydrolysis by HslU are essential for unfolding of protein substrates subsequently hydrolyzed by HslV. HslU recognizes the N-terminal part of its protein substrates and unfolds these before they are guided to HslV for hydrolysis. This Lactobacillus leichmannii protein is ATP-dependent protease ATPase subunit HslU.